The following is a 644-amino-acid chain: Exoribonuclease 2 (644 aa).

In terms of domain architecture, RNB spans 189 to 516; the sequence is RKDLTALDFV…NHRLLKAVIK (328 aa). An S1 motif domain is found at 561–643; it reads DTRFAAEIVD…ETRSIIARPV (83 aa).

It belongs to the RNR ribonuclease family. RNase II subfamily.

It is found in the cytoplasm. It catalyses the reaction Exonucleolytic cleavage in the 3'- to 5'-direction to yield nucleoside 5'-phosphates.. Involved in mRNA degradation. Hydrolyzes single-stranded polyribonucleotides processively in the 3' to 5' direction. The polypeptide is Exoribonuclease 2 (Escherichia coli O157:H7).